Reading from the N-terminus, the 26-residue chain is MNQKHLLRFIKKSYQVDADRVVYSTK.

The protein belongs to the metallo-dependent hydrolases superfamily. Adenosine and AMP deaminases family. In terms of assembly, homotetramer. Zn(2+) serves as cofactor.

It catalyses the reaction AMP + H2O + H(+) = IMP + NH4(+). Its pathway is purine metabolism; IMP biosynthesis via salvage pathway; IMP from AMP: step 1/1. Functionally, AMP deaminase plays a critical role in energy metabolism. In Oryctolagus cuniculus (Rabbit), this protein is AMP deaminase 1 (AMPD1).